We begin with the raw amino-acid sequence, 102 residues long: Small ribosomal subunit protein uS10 (102 aa).

It belongs to the universal ribosomal protein uS10 family. In terms of assembly, part of the 30S ribosomal subunit.

Its function is as follows. Involved in the binding of tRNA to the ribosomes. This Pelagibacter ubique (strain HTCC1062) protein is Small ribosomal subunit protein uS10.